We begin with the raw amino-acid sequence, 296 residues long: 4-hydroxybenzoate octaprenyltransferase (296 aa).

A run of 8 helical transmembrane segments spans residues 28–48 (PIGI…AGNG), 52–72 (LANV…GCCI), 102–122 (ALAL…CTNS), 145–167 (TYYP…FTAA), 174–196 (SAWL…YAMV), 219–239 (NIIL…GSRF), 241–261 (LGGW…WEYW), and 275–295 (FLHN…DYAF).

Belongs to the UbiA prenyltransferase family. Requires Mg(2+) as cofactor.

It is found in the cell inner membrane. The catalysed reaction is all-trans-octaprenyl diphosphate + 4-hydroxybenzoate = 4-hydroxy-3-(all-trans-octaprenyl)benzoate + diphosphate. The protein operates within cofactor biosynthesis; ubiquinone biosynthesis. Functionally, catalyzes the prenylation of para-hydroxybenzoate (PHB) with an all-trans polyprenyl group. Mediates the second step in the final reaction sequence of ubiquinone-8 (UQ-8) biosynthesis, which is the condensation of the polyisoprenoid side chain with PHB, generating the first membrane-bound Q intermediate 3-octaprenyl-4-hydroxybenzoate. The chain is 4-hydroxybenzoate octaprenyltransferase from Pseudomonas putida (strain GB-1).